Here is a 561-residue protein sequence, read N- to C-terminus: Cytochrome P450 monooxygenase iboC (561 aa).

Residues R8–A28 traverse the membrane as a helical segment. Residue C484 participates in heme binding.

Belongs to the cytochrome P450 family. Heme serves as cofactor.

It localises to the membrane. It functions in the pathway secondary metabolite biosynthesis. Its function is as follows. Cytochrome P450 monooxygenase; part of the gene cluster that mediates the biosynthesis of the psychoactive metabolites ibotenic acid and muscimol. The first committed step is glutamate hydroxylation by the 2-oxoglutarate-dependent dioxygenase iboH, and the last step is decarboxylation of ibotenic acid to muscimol by the decarboxylase iboD. The order of the intermediate reactions is somewhat ambiguous. IboA likely activates the carboxylic acid at position 5 to introduce an amide bond, and the flavin monooxygenase iboF generates the N-O bond. There are several options for the latter step. One option is that iboF directly hydroxylates the amide nitrogen formed by iboA to produce a hydroxamic acid species. Another option is that iboF hydroxylates an external N-containing compound, whose resulting N-O bond is subsequently introduced into the hydroxyglutamate scaffold. The paralogous PLP-dependent cystathionine gamma-synthase-like enzymes iboG1 and iboG2 are likely involved in substitution of the OH group at position 3 by the O-N moiety. The first cyclic intermediate is most probably tricholomic acid which is likely desaturated to ibotenic acid by the cytochrome P450 monooxygenase iboC. The chain is Cytochrome P450 monooxygenase iboC from Amanita muscaria (strain Koide BX008).